The sequence spans 143 residues: Transcription antitermination protein NusB (143 aa).

The protein belongs to the NusB family.

Involved in transcription antitermination. Required for transcription of ribosomal RNA (rRNA) genes. Binds specifically to the boxA antiterminator sequence of the ribosomal RNA (rrn) operons. The protein is Transcription antitermination protein NusB of Desulforamulus reducens (strain ATCC BAA-1160 / DSM 100696 / MI-1) (Desulfotomaculum reducens).